The sequence spans 265 residues: NADH dehydrogenase [ubiquinone] iron-sulfur protein 3, mitochondrial (265 aa).

The N-terminal 33 residues, 1 to 33, are a transit peptide targeting the mitochondrion; sequence MAALIRNLGARAAVAALSAKHVVPAAGSTALRM.

The protein belongs to the complex I 30 kDa subunit family. As to quaternary structure, part of the mitochondrial membrane respiratory chain NADH dehydrogenase (Complex I). Interacts with sicily; interaction is stronger with unprocessed sicily protein.

Its subcellular location is the mitochondrion. The enzyme catalyses a ubiquinone + NADH + 5 H(+)(in) = a ubiquinol + NAD(+) + 4 H(+)(out). Its function is as follows. Core subunit of the mitochondrial membrane respiratory chain NADH dehydrogenase (Complex I) that is believed to belong to the minimal assembly required for catalysis. Complex I functions in the transfer of electrons from NADH to the respiratory chain. The immediate electron acceptor for the enzyme is believed to be ubiquinone. The polypeptide is NADH dehydrogenase [ubiquinone] iron-sulfur protein 3, mitochondrial (Drosophila melanogaster (Fruit fly)).